A 456-amino-acid chain; its full sequence is Peripherin (456 aa).

The segment covering 1-14 has biased composition (polar residues); that stretch reads MSHSGLRSTSTSYR. The disordered stretch occupies residues 1-55; it reads MSHSGLRSTSTSYRRTLGSSPVPSSYSSSSRLSTSRHFGSPSPGPSSRSSSSAFR. Residues 1–90 are head; it reads MSHSGLRSTS…FLTTRSNEKA (90 aa). The span at 16–55 shows a compositional bias: low complexity; sequence TLGSSPVPSSYSSSSRLSTSRHFGSPSPGPSSRSSSSAFR. The IF rod domain maps to 88–397; that stretch reads EKAELQELND…KLLEGEESRI (310 aa). Residues 91–123 form a coil 1A region; sequence ELQELNDRFASFIEKVRYLEQQNAVLVTEINQA. The interval 124–134 is linker 1; the sequence is RSKEPTRASDL. Positions 135–230 are coil 1B; the sequence is CQQELRELRK…KLHEEELNDV (96 aa). Residues 231-252 form a linker 2 region; it reads QVSVQAQPVHMEIEAAKQPDLT. Residues 253-395 are coil 2; sequence SALRDIRSQY…YRKLLEGEES (143 aa). The tract at residues 396–456 is tail; sequence RIAVPIHSLT…RKEQSSEGEK (61 aa). Residues 411–456 form a disordered region; it reads SPAAPEIDPSTETHTRKTVAIKTIETRDGEQVVTESRKEQSSEGEK. Residues 434 to 456 are compositionally biased toward basic and acidic residues; it reads IETRDGEQVVTESRKEQSSEGEK.

The protein belongs to the intermediate filament family. As to quaternary structure, forms homodimers (in vitro). Homopolymerizes into a filamentous network (in vitro).

Its subcellular location is the cytoplasm. It is found in the cytoskeleton. It localises to the cell projection. The protein resides in the axon. The protein localises to the perikaryon. Functionally, class-III neuronal intermediate filament protein. My form an independent structural network without the involvement of other neurofilaments or may cooperate with other neuronal intermediate filament proteins to form a filamentous network. The sequence is that of Peripherin (prph) from Xenopus laevis (African clawed frog).